A 185-amino-acid polypeptide reads, in one-letter code: ATP-dependent protease subunit HslV (185 aa).

Residue threonine 12 is part of the active site. Positions 168, 171, and 174 each coordinate Na(+).

It belongs to the peptidase T1B family. HslV subfamily. As to quaternary structure, a double ring-shaped homohexamer of HslV is capped on each side by a ring-shaped HslU homohexamer. The assembly of the HslU/HslV complex is dependent on binding of ATP.

Its subcellular location is the cytoplasm. It catalyses the reaction ATP-dependent cleavage of peptide bonds with broad specificity.. Allosterically activated by HslU binding. Its function is as follows. Protease subunit of a proteasome-like degradation complex believed to be a general protein degrading machinery. This Cereibacter sphaeroides (strain KD131 / KCTC 12085) (Rhodobacter sphaeroides) protein is ATP-dependent protease subunit HslV.